A 695-amino-acid polypeptide reads, in one-letter code: NADPH--cytochrome P450 reductase (695 aa).

At 1–8 the chain is on the lumenal side; it reads MAQLDTLD. The helical transmembrane segment at 9 to 31 threads the bilayer; it reads LVVLVALLVGSVAYFTKGTYWAV. At 32–695 the chain is on the cytoplasmic side; the sequence is AKDPYASSGP…SGSYQEDVWS (664 aa). Residues 66–221 enclose the Flavodoxin-like domain; sequence CVIFYGSQTG…DFLAWKEPMW (156 aa). Residues 72–77, 123–126, 169–178, and D204 contribute to the FMN site; these read SQTGTA, ATYG, and LGNNTYEHYN. An FAD-binding FR-type domain is found at 277–538; it reads HNPFIAPIVE…HVRHSNFKLP (262 aa). Residue R296 coordinates NADP(+). FAD is bound by residues 451-454, 469-471, and 486-489; these read RYYS, TAV, and GVTT. NADP(+) is bound by residues T552, 614-615, 620-624, and E656; these read SR and KVYVQ. W694 contacts FAD.

It belongs to the NADPH--cytochrome P450 reductase family. In the N-terminal section; belongs to the flavodoxin family. This sequence in the C-terminal section; belongs to the flavoprotein pyridine nucleotide cytochrome reductase family. Requires FAD as cofactor. FMN is required as a cofactor.

Its subcellular location is the endoplasmic reticulum membrane. It localises to the mitochondrion outer membrane. It is found in the cell membrane. It carries out the reaction 2 oxidized [cytochrome P450] + NADPH = 2 reduced [cytochrome P450] + NADP(+) + H(+). This enzyme is required for electron transfer from NADP to cytochrome P450 in microsomes. It can also provide electron transfer to heme oxygenase and cytochrome B5. Involved in ergosterol biosynthesis. The chain is NADPH--cytochrome P450 reductase from Aspergillus oryzae (strain ATCC 42149 / RIB 40) (Yellow koji mold).